Here is a 576-residue protein sequence, read N- to C-terminus: 5'-nucleotidase (576 aa).

The first 28 residues, 1–28 (MRPAAATAPKWLLLALSALLPLWPTAKS), serve as a signal peptide directing secretion. The Zn(2+) site is built by Asp38 and His40. A disulfide bond links Cys53 and Cys59. A glycan (N-linked (GlcNAc...) asparagine) is linked at Asn55. Residues Asp87, Asn119, His222, and His245 each coordinate Zn(2+). Residues Asn313, Asn335, and Asn349 are each glycosylated (N-linked (GlcNAc...) asparagine). 2 disulfide bridges follow: Cys355–Cys360 and Cys367–Cys389. Arg356 lines the AMP pocket. An IMP-binding site is contributed by Arg356. AMP is bound by residues Asn392 and Arg397. IMP contacts are provided by Asn392 and Arg397. An N-linked (GlcNAc...) asparagine glycan is attached at Asn405. Phe419 lines the AMP pocket. Residue Phe419 participates in IMP binding. Cys478 and Cys481 are disulfide-bonded. 2 residues coordinate AMP: Tyr502 and Asp508. Tyr502 and Asp508 together coordinate IMP. Ser551 is lipidated: GPI-anchor amidated serine. Positions 552–576 (AASHYQGSFPLIILSFWAVILVLYQ) are cleaved as a propeptide — removed in mature form.

The protein belongs to the 5'-nucleotidase family. In terms of assembly, homodimer. Requires Zn(2+) as cofactor. In terms of tissue distribution, expressed in the brain.

It is found in the cell membrane. It carries out the reaction a ribonucleoside 5'-phosphate + H2O = a ribonucleoside + phosphate. It catalyses the reaction a 2'-deoxyribonucleoside 5'-phosphate + H2O = a 2'-deoxyribonucleoside + phosphate. The catalysed reaction is dTMP + H2O = thymidine + phosphate. The enzyme catalyses CMP + H2O = cytidine + phosphate. It carries out the reaction IMP + H2O = inosine + phosphate. It catalyses the reaction AMP + H2O = adenosine + phosphate. The catalysed reaction is GMP + H2O = guanosine + phosphate. The enzyme catalyses UMP + H2O = uridine + phosphate. It carries out the reaction dAMP + H2O = 2'-deoxyadenosine + phosphate. It catalyses the reaction dCMP + H2O = 2'-deoxycytidine + phosphate. Catalyzes the hydrolysis of nucleotide monophosphates, releasing inorganic phosphate and the corresponding nucleoside. AMP is the preferred substrate but can also hydrolyze CMP and GMP. Shows a preference for ribonucleotide monophosphates over their equivalent deoxyribose forms. Other substrates include IMP, UMP, dAMP, dCMP, dTMP, NAD and NMN. The polypeptide is 5'-nucleotidase (Nt5e) (Rattus norvegicus (Rat)).